The following is a 101-amino-acid chain: Large ribosomal subunit protein uL24 (101 aa).

It belongs to the universal ribosomal protein uL24 family. In terms of assembly, part of the 50S ribosomal subunit.

One of two assembly initiator proteins, it binds directly to the 5'-end of the 23S rRNA, where it nucleates assembly of the 50S subunit. Its function is as follows. One of the proteins that surrounds the polypeptide exit tunnel on the outside of the subunit. This Streptococcus pyogenes serotype M2 (strain MGAS10270) protein is Large ribosomal subunit protein uL24.